Here is a 545-residue protein sequence, read N- to C-terminus: Baeyer-Villiger monooxygenase (545 aa).

FAD contacts are provided by Phe24, Asp45, Trp54, Asp65, Tyr71, and Val118.

It belongs to the FAD-binding monooxygenase family. The cofactor is FAD.

Catalyzes a Baeyer-Villiger oxidation reaction, i.e. the insertion of an oxygen atom into a carbon-carbon bond adjacent to a carbonyl, which converts ketones to esters or lactones using NADPH as an electron donor. Besides cycloalkanones, can use cyclic alpha,beta-unsaturated ketones as substrates, leading to conjugated ene-lactones. Can also act on methylated cycloalkanones and methylated cycloalkenones with high enantioselectivity in some cases. The sequence is that of Baeyer-Villiger monooxygenase from Pseudooceanicola batsensis (strain ATCC BAA-863 / DSM 15984 / KCTC 12145 / HTCC2597) (Oceanicola batsensis).